Reading from the N-terminus, the 282-residue chain is Probable iron transport system membrane protein HI_0360 (282 aa).

Helical transmembrane passes span 17-37, 63-83, 93-113, 140-160, 164-184, 186-206, 223-243, and 245-265; these read AMIL…YLML, LPYA…ILWI, AVIG…VSLN, IIIG…LLIF, TQAI…FTLL, ACVV…MVVT, IIAI…SYYL, and GATG…AFLF.

The protein belongs to the ABC-3 integral membrane protein family.

The protein localises to the cell inner membrane. Part of an ATP-driven transport system HI_0359/HI_0360/HI_0361/HI_0362 for iron. The protein is Probable iron transport system membrane protein HI_0360 of Haemophilus influenzae (strain ATCC 51907 / DSM 11121 / KW20 / Rd).